We begin with the raw amino-acid sequence, 660 residues long: DNA mismatch repair protein MutL (660 aa).

The tract at residues 414 to 433 is disordered; sequence SSVKHASRPQNTFTETDHPN.

This sequence belongs to the DNA mismatch repair MutL/HexB family.

In terms of biological role, this protein is involved in the repair of mismatches in DNA. It is required for dam-dependent methyl-directed DNA mismatch repair. May act as a 'molecular matchmaker', a protein that promotes the formation of a stable complex between two or more DNA-binding proteins in an ATP-dependent manner without itself being part of a final effector complex. This is DNA mismatch repair protein MutL from Streptococcus pyogenes serotype M6 (strain ATCC BAA-946 / MGAS10394).